The primary structure comprises 352 residues: MTQISERLLVQAHLDAKQPKPLTAEEEAYYRSAIAAELKAQDAVLVAHFYCDPIIQALAEETGGCVSDSLEMARFGNAHPAKTVVVAGVKFMGETAKILNPEKRVLMPTLEATCSLDLGCPVDEFSAFCDQHPERTVVVYANTSAAVKARADWVVTSSCALEIVESLKDNGETIIWGPDKHLGTYIQRQTGADMLLWDGACIVHEEFKSKQLEDMKALYPDAAILVHPESPTSVIELADAVGSTSQLIAAAQSLPNKTLIVATDRGIFYKMQQLCPDKVFIEAPTAGNGAACRSCAHCPWMAMNTLERTLKCLKEGSNEIFVDPALIPQAIRPLKRMLDFTQAARMKLAGNA.

2 residues coordinate iminosuccinate: His-48 and Ser-69. Position 114 (Cys-114) interacts with [4Fe-4S] cluster. Iminosuccinate contacts are provided by residues 140-142 (YAN) and Ser-157. Cys-201 lines the [4Fe-4S] cluster pocket. Residues 227-229 (HPE) and Thr-244 each bind iminosuccinate. Cys-298 lines the [4Fe-4S] cluster pocket.

It belongs to the quinolinate synthase family. Type 1 subfamily. Requires [4Fe-4S] cluster as cofactor.

It is found in the cytoplasm. It catalyses the reaction iminosuccinate + dihydroxyacetone phosphate = quinolinate + phosphate + 2 H2O + H(+). Its pathway is cofactor biosynthesis; NAD(+) biosynthesis; quinolinate from iminoaspartate: step 1/1. Catalyzes the condensation of iminoaspartate with dihydroxyacetone phosphate to form quinolinate. This Pseudomonas fluorescens (strain Pf0-1) protein is Quinolinate synthase.